Consider the following 206-residue polypeptide: MAASTASHRPIKGILKNKTSAASPPVVPSAEQPRPIVEEELSKKSQKWDEMNILATYHPADKDYGLMKIDEPNTPYHNMIGDDEDAYSDSEGNEVMTPDILAKKLAAAEGSEPKYRTREQESSGEEDNDLSPEEREKKRQFEMKRKLHYNEGLNIKLARQLISKDLHDDDEDEEMAETADGDSMNVEESSQGSTTSDHLQHKSQSS.

Positions 1–36 are disordered; that stretch reads MAASTASHRPIKGILKNKTSAASPPVVPSAEQPRPI. N-acetylalanine is present on Ala-2. The segment at 12-17 is required for binding PPP1CC; the sequence is KGILKN. The interval 44–56 is required for binding the 'RVXF' binding groove of PPP1CC; that stretch reads KSQKWDEMNILAT. At Ser-45 the chain carries Phosphoserine; by ATM. Position 74 is a phosphothreonine (Thr-74). The disordered stretch occupies residues 75–143; it reads PYHNMIGDDE…EREKKRQFEM (69 aa). Residues 81–92 are compositionally biased toward acidic residues; it reads GDDEDAYSDSEG. Phosphoserine is present on residues Ser-88 and Ser-90. Phosphothreonine is present on residues Thr-97 and Thr-117. A compositionally biased stretch (basic and acidic residues) spans 111–121; that stretch reads SEPKYRTREQE. 3 positions are modified to phosphoserine: Ser-122, Ser-123, and Ser-131. The span at 122 to 131 shows a compositional bias: acidic residues; sequence SSGEEDNDLS. Positions 132–143 are enriched in basic and acidic residues; it reads PEEREKKRQFEM. Residues 148 to 151 form a required for binding PPP1CC catalytic center, displacing metal ions and inhibition of PPP1CC catalytic activity region; sequence HYNE. Residues 164-206 are disordered; sequence KDLHDDDEDEEMAETADGDSMNVEESSQGSTTSDHLQHKSQSS. Residues 168–180 are compositionally biased toward acidic residues; it reads DDDEDEEMAETAD. Positions 186 to 206 are enriched in polar residues; sequence VEESSQGSTTSDHLQHKSQSS.

This sequence belongs to the protein phosphatase inhibitor 2 family. Heterodimer with PP1. Post-translationally, phosphorylation on Ser-45 by ATM activates PP1 by dissociating the PP1-PPP1R2 complex. Phosphorylation on Thr-74 by GSK3 activates PP1 by dissociating the PP1-PPP1R2 complex.

Its function is as follows. Inhibitor of protein-phosphatase 1. This Mus musculus (Mouse) protein is Protein phosphatase inhibitor 2 (Ppp1r2).